A 574-amino-acid chain; its full sequence is Thiol:disulfide interchange protein DsbD (574 aa).

An N-terminal signal peptide occupies residues 1 to 19 (MAHRILTLILLFCSAHASA). Cys-122 and Cys-128 are joined by a disulfide. The tract at residues 147–169 (VKANAATPSAATGEQTRVNSDSP) is disordered. Residues 152-169 (ATPSAATGEQTRVNSDSP) show a composition bias toward polar residues. The next 7 helical transmembrane spans lie at 173–193 (LPFS…TPCV), 218–238 (LLAF…GLVV), 253–273 (WVLV…FGLF), 306–326 (IAGL…LLYI), 333–353 (WLGG…LILV), 367–387 (WMEQ…VFLL), and 399–419 (LWSV…LNAT). An intrachain disulfide couples Cys-192 to Cys-314. Positions 430-574 (LLGAAMICAR…FATHLHNRLR (145 aa)) constitute a Thioredoxin domain. The cysteines at positions 489 and 492 are disulfide-linked.

It belongs to the thioredoxin family. DsbD subfamily.

It is found in the cell inner membrane. The enzyme catalyses [protein]-dithiol + NAD(+) = [protein]-disulfide + NADH + H(+). The catalysed reaction is [protein]-dithiol + NADP(+) = [protein]-disulfide + NADPH + H(+). Required to facilitate the formation of correct disulfide bonds in some periplasmic proteins and for the assembly of the periplasmic c-type cytochromes. Acts by transferring electrons from cytoplasmic thioredoxin to the periplasm. This transfer involves a cascade of disulfide bond formation and reduction steps. This Cronobacter sakazakii (strain ATCC BAA-894) (Enterobacter sakazakii) protein is Thiol:disulfide interchange protein DsbD.